The primary structure comprises 412 residues: CCA-adding enzyme (412 aa).

ATP contacts are provided by S41 and K44. S41 and K44 together coordinate CTP. 3 residues coordinate Mg(2+): D53, D55, and D106. Residues H129, K149, and Y158 each coordinate ATP. Residues H129, K149, and Y158 each coordinate CTP.

It belongs to the tRNA nucleotidyltransferase/poly(A) polymerase family. Archaeal CCA-adding enzyme subfamily. In terms of assembly, homodimer. The cofactor is Mg(2+).

The catalysed reaction is a tRNA precursor + 2 CTP + ATP = a tRNA with a 3' CCA end + 3 diphosphate. The enzyme catalyses a tRNA with a 3' CCA end + 2 CTP + ATP = a tRNA with a 3' CCACCA end + 3 diphosphate. In terms of biological role, catalyzes the addition and repair of the essential 3'-terminal CCA sequence in tRNAs without using a nucleic acid template. Adds these three nucleotides in the order of C, C, and A to the tRNA nucleotide-73, using CTP and ATP as substrates and producing inorganic pyrophosphate. tRNA 3'-terminal CCA addition is required both for tRNA processing and repair. Also involved in tRNA surveillance by mediating tandem CCA addition to generate a CCACCA at the 3' terminus of unstable tRNAs. While stable tRNAs receive only 3'-terminal CCA, unstable tRNAs are marked with CCACCA and rapidly degraded. The protein is CCA-adding enzyme of Saccharolobus islandicus (strain Y.G.57.14 / Yellowstone #1) (Sulfolobus islandicus).